The following is a 342-amino-acid chain: Putative ABC transporter anion-binding protein HVO_1888 (342 aa).

Positions 1 to 32 (MAIERRRFLQAAGVGAVLGLSGCTGNTSPPQA) form a signal peptide, tat-type signal. Residues 24–37 (TGNTSPPQANNETA) are compositionally biased toward polar residues. Residues 24 to 52 (TGNTSPPQANNETAEGSGGSESGDGSTQE) form a disordered region.

The complex is composed of two ATP-binding proteins (HVO_1886), two transmembrane proteins (HVO_1887) and a solute-binding protein (HVO_1888). Predicted to be exported by the Tat system. The position of the signal peptide cleavage has not been experimentally proven.

Part of an ABC transporter complex involved in anions import. The chain is Putative ABC transporter anion-binding protein HVO_1888 from Haloferax volcanii (strain ATCC 29605 / DSM 3757 / JCM 8879 / NBRC 14742 / NCIMB 2012 / VKM B-1768 / DS2) (Halobacterium volcanii).